Consider the following 528-residue polypeptide: GMP synthase [glutamine-hydrolyzing] (528 aa).

The Glutamine amidotransferase type-1 domain occupies threonine 13–threonine 203. Cysteine 90 (nucleophile) is an active-site residue. Active-site residues include histidine 177 and glutamate 179. In terms of domain architecture, GMPS ATP-PPase spans tryptophan 204–arginine 402. An ATP-binding site is contributed by serine 231–alanine 237.

Homodimer.

It catalyses the reaction XMP + L-glutamine + ATP + H2O = GMP + L-glutamate + AMP + diphosphate + 2 H(+). The protein operates within purine metabolism; GMP biosynthesis; GMP from XMP (L-Gln route): step 1/1. Catalyzes the synthesis of GMP from XMP. This Thermobifida fusca (strain YX) protein is GMP synthase [glutamine-hydrolyzing].